We begin with the raw amino-acid sequence, 146 residues long: Protein ADM2 (146 aa).

Positions 1–25 are cleaved as a signal peptide; sequence MAQLLMVTVTFGCISLLYLLPGTLS. Positions 26 to 96 are excised as a propeptide; sequence GSLGKGLRPR…HPGPQRHVGS (71 aa). The tract at residues 29-99 is disordered; it reads GKGLRPREPP…PQRHVGSRRP (71 aa). Cysteines 108 and 113 form a disulfide. Tyrosine 145 bears the Tyrosine amide mark.

This sequence belongs to the adrenomedullin family. As to expression, expression was restricted to the intermediate and anterior lobes of the pituitary.

The protein resides in the secreted. In terms of biological role, intermedin/ADM2 is a peptide hormone that plays a role as physiological regulator of gastrointestinal and cardiovascular bioactivities mediated by the CALCRL-RAMPs receptor complexes. Activates the cAMP-dependent pathway through interaction with CALCRL-RAMP3 receptor complex. This Rattus norvegicus (Rat) protein is Protein ADM2.